Consider the following 246-residue polypeptide: Transcription factor A, mitochondrial (246 aa).

The N-terminal 42 residues, 1–42, are a transit peptide targeting the mitochondrion; sequence MAFLRSMWGVLSALGRSGAAVCIGCGSRLRSPFSFVYLPKCF. Positions 50-118 form a DNA-binding region, HMG box 1; sequence PKKPVSSYLR…VYKEKISRFK (69 aa). A phosphoserine; by PKA mark is found at serine 55, serine 56, and serine 61. Threonine 122 carries the post-translational modification Phosphothreonine. The HMG box 2 DNA-binding region spans 155-219; sequence PKRPRSAYNV…RYHNEMKSWE (65 aa). Serine 160 is subject to Phosphoserine; by PKA. A phosphoserine mark is found at serine 193 and serine 195.

As to quaternary structure, monomer; binds DNA as a monomer. Homodimer. Component of the mitochondrial transcription initiation complex, composed at least of TFB2M, TFAM and POLRMT. In this complex TFAM recruits POLRMT to the promoter whereas TFB2M induces structural changes in POLRMT to enable promoter opening and trapping of the DNA non-template strand. Upon metabolic stress, forms a complex composed of FOXO3, SIRT3, TFAM and POLRMT. Interacts with TFB1M and TFB2M. Interacts with CLPX; this enhances DNA-binding. Phosphorylation by PKA within the HMG box 1 impairs DNA binding and promotes degradation by the AAA+ Lon protease.

It is found in the mitochondrion. The protein localises to the mitochondrion matrix. The protein resides in the mitochondrion nucleoid. Functionally, binds to the mitochondrial light strand promoter and functions in mitochondrial transcription regulation. Component of the mitochondrial transcription initiation complex, composed at least of TFB2M, TFAM and POLRMT that is required for basal transcription of mitochondrial DNA. In this complex, TFAM recruits POLRMT to a specific promoter whereas TFB2M induces structural changes in POLRMT to enable promoter opening and trapping of the DNA non-template strand. Required for accurate and efficient promoter recognition by the mitochondrial RNA polymerase. Promotes transcription initiation from the HSP1 and the light strand promoter by binding immediately upstream of transcriptional start sites. Is able to unwind DNA. Bends the mitochondrial light strand promoter DNA into a U-turn shape via its HMG boxes. Required for maintenance of normal levels of mitochondrial DNA. May play a role in organizing and compacting mitochondrial DNA. This is Transcription factor A, mitochondrial from Trachypithecus cristatus (Silvered leaf-monkey).